The primary structure comprises 74 residues: Peptide BmKb1 (74 aa).

The signal sequence occupies residues M1–A22. K40 bears the Lysine amide mark. A propeptide spanning residues D46–Y74 is cleaved from the precursor.

It belongs to the non-disulfide-bridged peptide (NDBP) superfamily. Short antimicrobial peptide (group 4) family. As to expression, expressed by the venom gland.

The protein localises to the secreted. Its subcellular location is the target cell membrane. Its function is as follows. Has antibacterial activity against Gram-positive bacteria S.aureus, M.luteus, B.subtilis, and Gram-negative bacteria E.coli, and P.aeruginosa. This chain is Peptide BmKb1, found in Olivierus martensii (Manchurian scorpion).